Consider the following 361-residue polypeptide: Polyribonucleotide 5'-hydroxyl-kinase PH0197 (361 aa).

Gly43–Thr50 provides a ligand contact to ATP.

A divalent metal cation is required as a cofactor.

It catalyses the reaction a 5'-end dephospho-2'-deoxyribonucleoside-DNA + ATP = a 5'-end 5'-phospho-2'-deoxyribonucleoside-DNA + ADP + H(+). The catalysed reaction is a 5'-end dephospho-ribonucleoside-RNA + ATP = a 5'-end 5'-phospho-ribonucleoside-RNA + ADP + H(+). DNA kinase activity is inhibited by 250 mM sodium chloride whereas RNA kinase activity is unaffected. Polynucleotide kinase that can phosphorylate the 5'-hydroxyl groups of both single-stranded RNA (ssRNA) and single-stranded DNA (ssDNA). Exhibits a strong preference for ssRNA. In Pyrococcus horikoshii (strain ATCC 700860 / DSM 12428 / JCM 9974 / NBRC 100139 / OT-3), this protein is Polyribonucleotide 5'-hydroxyl-kinase PH0197.